A 278-amino-acid polypeptide reads, in one-letter code: Large ribosomal subunit protein uL2 (278 aa).

The disordered stretch occupies residues 224–262 (VMNPVDHPLGGGEGRTSGGRHPVTPWGKPTKGFKTRKTR).

The protein belongs to the universal ribosomal protein uL2 family. As to quaternary structure, part of the 50S ribosomal subunit. Forms a bridge to the 30S subunit in the 70S ribosome.

In terms of biological role, one of the primary rRNA binding proteins. Required for association of the 30S and 50S subunits to form the 70S ribosome, for tRNA binding and peptide bond formation. It has been suggested to have peptidyltransferase activity; this is somewhat controversial. Makes several contacts with the 16S rRNA in the 70S ribosome. This Leptospira biflexa serovar Patoc (strain Patoc 1 / Ames) protein is Large ribosomal subunit protein uL2.